The sequence spans 164 residues: UPF0114 protein KPN78578_33570 (164 aa).

The next 4 membrane-spanning stretches (helical) occupy residues 15–35 (LLAPVYFGLSLGLIALTIKFF), 53–73 (MILTLLSLVDMTLVGGLLVMV), 109–126 (VAASIVAISSIHLLRVFM), and 136–156 (LMWYVIIHLTFVLSAFVMGYL).

This sequence belongs to the UPF0114 family.

It localises to the cell membrane. The chain is UPF0114 protein KPN78578_33570 from Klebsiella pneumoniae subsp. pneumoniae (strain ATCC 700721 / MGH 78578).